The primary structure comprises 445 residues: Phosphoglucosamine mutase (445 aa).

The active-site Phosphoserine intermediate is the serine 101. Mg(2+) is bound by residues serine 101, aspartate 240, aspartate 242, and aspartate 244. Position 101 is a phosphoserine (serine 101).

This sequence belongs to the phosphohexose mutase family. Mg(2+) serves as cofactor. Activated by phosphorylation.

It carries out the reaction alpha-D-glucosamine 1-phosphate = D-glucosamine 6-phosphate. Catalyzes the conversion of glucosamine-6-phosphate to glucosamine-1-phosphate. The sequence is that of Phosphoglucosamine mutase from Pseudomonas fluorescens (strain ATCC BAA-477 / NRRL B-23932 / Pf-5).